We begin with the raw amino-acid sequence, 119 residues long: MRPVDADEAREPREEPGSPLSPAPRAGRENLASLERERARAHWRARRKLLEIQSLLDAIKSEVEAEERGARAPAPRPRAEAEERVARLCAEAERKAAEAARMGRRIVELHQRIAGCECC.

Residues 1-16 are compositionally biased toward basic and acidic residues; it reads MRPVDADEAREPREEP. The disordered stretch occupies residues 1-36; the sequence is MRPVDADEAREPREEPGSPLSPAPRAGRENLASLER.

Belongs to the MORF4 family-associated protein family. May interact with CDK2AP1.

In terms of biological role, may play a role in cell proliferation. The polypeptide is MORF4 family associated protein 1 like 2 (Homo sapiens (Human)).